A 285-amino-acid chain; its full sequence is 4-diphosphocytidyl-2-C-methyl-D-erythritol kinase (285 aa).

Lysine 12 is a catalytic residue. An ATP-binding site is contributed by 95 to 105 (PVGAGLAGGST). Aspartate 137 is an active-site residue.

Belongs to the GHMP kinase family. IspE subfamily.

It carries out the reaction 4-CDP-2-C-methyl-D-erythritol + ATP = 4-CDP-2-C-methyl-D-erythritol 2-phosphate + ADP + H(+). The protein operates within isoprenoid biosynthesis; isopentenyl diphosphate biosynthesis via DXP pathway; isopentenyl diphosphate from 1-deoxy-D-xylulose 5-phosphate: step 3/6. Catalyzes the phosphorylation of the position 2 hydroxy group of 4-diphosphocytidyl-2C-methyl-D-erythritol. The sequence is that of 4-diphosphocytidyl-2-C-methyl-D-erythritol kinase from Syntrophomonas wolfei subsp. wolfei (strain DSM 2245B / Goettingen).